We begin with the raw amino-acid sequence, 274 residues long: Large ribosomal subunit protein uL2 (274 aa).

Residues 223–256 (VAMNPVDHPHGGGEGRTSGGRHPVTPWGIPTKGY) are disordered.

The protein belongs to the universal ribosomal protein uL2 family. In terms of assembly, part of the 50S ribosomal subunit. Forms a bridge to the 30S subunit in the 70S ribosome.

Functionally, one of the primary rRNA binding proteins. Required for association of the 30S and 50S subunits to form the 70S ribosome, for tRNA binding and peptide bond formation. It has been suggested to have peptidyltransferase activity; this is somewhat controversial. Makes several contacts with the 16S rRNA in the 70S ribosome. This chain is Large ribosomal subunit protein uL2, found in Trichlorobacter lovleyi (strain ATCC BAA-1151 / DSM 17278 / SZ) (Geobacter lovleyi).